The following is a 217-amino-acid chain: Adenylate kinase (217 aa).

11–16 (GAGKGT) is a binding site for ATP. Residues 31–60 (STGDMFREAMANETPVGLEAKSYIDKGNLV) are NMP. AMP-binding positions include Thr32, Arg37, 58 to 60 (NLV), 86 to 89 (GFPR), and Gln93. Residues 127 to 165 (ARYICKKCGATYNKISNPTKVEGTCDRCGGHEFFQREDD) form an LID region. An ATP-binding site is contributed by Arg128. Residues Cys131 and Cys134 each coordinate Zn(2+). Position 137 to 138 (137 to 138 (TY)) interacts with ATP. Residues Cys151 and Cys154 each coordinate Zn(2+). The AMP site is built by Arg162 and Arg173. Residue Gln201 coordinates ATP.

It belongs to the adenylate kinase family. Monomer.

It localises to the cytoplasm. It carries out the reaction AMP + ATP = 2 ADP. The protein operates within purine metabolism; AMP biosynthesis via salvage pathway; AMP from ADP: step 1/1. In terms of biological role, catalyzes the reversible transfer of the terminal phosphate group between ATP and AMP. Plays an important role in cellular energy homeostasis and in adenine nucleotide metabolism. The chain is Adenylate kinase from Lactobacillus johnsonii (strain CNCM I-12250 / La1 / NCC 533).